The following is a 408-amino-acid chain: LL-diaminopimelate aminotransferase (408 aa).

Y15 and G42 together coordinate substrate. Pyridoxal 5'-phosphate is bound by residues Y72, 108–109 (AK), Y132, N186, Y217, and 245–247 (SFS). Positions 109, 132, and 186 each coordinate substrate. The residue at position 248 (K248) is an N6-(pyridoxal phosphate)lysine. Positions 256 and 291 each coordinate pyridoxal 5'-phosphate. The substrate site is built by N291 and R386.

The protein belongs to the class-I pyridoxal-phosphate-dependent aminotransferase family. LL-diaminopimelate aminotransferase subfamily. Homodimer. Requires pyridoxal 5'-phosphate as cofactor.

The catalysed reaction is (2S,6S)-2,6-diaminopimelate + 2-oxoglutarate = (S)-2,3,4,5-tetrahydrodipicolinate + L-glutamate + H2O + H(+). It functions in the pathway amino-acid biosynthesis; L-lysine biosynthesis via DAP pathway; LL-2,6-diaminopimelate from (S)-tetrahydrodipicolinate (aminotransferase route): step 1/1. Functionally, involved in the synthesis of meso-diaminopimelate (m-DAP or DL-DAP), required for both lysine and peptidoglycan biosynthesis. Catalyzes the direct conversion of tetrahydrodipicolinate to LL-diaminopimelate. The protein is LL-diaminopimelate aminotransferase of Desulfotalea psychrophila (strain LSv54 / DSM 12343).